The chain runs to 229 residues: MIRSVLASVSPLRQILASQLCTSSITLAGIRPLGPKNKAPDFSGTAVVNGDFKTISMKDYKGKWLILFFYPLDFTFVCPTEITAFSDRCAEFQKLNTELIACSCDSHFSHLAWIQTPRSEVGGLGDMKIPVLADFNKDIANAFGVLDHETGISYRGLFLIDPSGEIRHSLVNDLSVGRSVDEAFRTLKAFQFVEKHGEVCPANWSDDKPTIKPGIKESKEYFKKVDGHT.

The 160-residue stretch at 33-192 (LGPKNKAPDF…AFRTLKAFQF (160 aa)) folds into the Thioredoxin domain. The active-site Cysteine sulfenic acid (-SOH) intermediate is the Cys-78.

This sequence belongs to the peroxiredoxin family. AhpC/Prx1 subfamily. In terms of assembly, homodimer; disulfide-linked, upon oxidation.

The enzyme catalyses a hydroperoxide + [thioredoxin]-dithiol = an alcohol + [thioredoxin]-disulfide + H2O. In terms of biological role, thiol-specific peroxidase that catalyzes the reduction of hydrogen peroxide and organic hydroperoxides to water and alcohols, respectively. Plays a role in cell protection against oxidative stress by detoxifying peroxides and as sensor of hydrogen peroxide-mediated signaling events. In Brugia malayi (Filarial nematode worm), this protein is Peroxiredoxin 1 (TSA1).